A 206-amino-acid polypeptide reads, in one-letter code: Imidazoleglycerol-phosphate dehydratase (206 aa).

Belongs to the imidazoleglycerol-phosphate dehydratase family.

The protein resides in the cytoplasm. It catalyses the reaction D-erythro-1-(imidazol-4-yl)glycerol 3-phosphate = 3-(imidazol-4-yl)-2-oxopropyl phosphate + H2O. It participates in amino-acid biosynthesis; L-histidine biosynthesis; L-histidine from 5-phospho-alpha-D-ribose 1-diphosphate: step 6/9. This chain is Imidazoleglycerol-phosphate dehydratase, found in Synechococcus sp. (strain JA-3-3Ab) (Cyanobacteria bacterium Yellowstone A-Prime).